A 338-amino-acid chain; its full sequence is Aspartate carbamoyltransferase catalytic subunit (338 aa).

The carbamoyl phosphate site is built by Arg59 and Thr60. Lys87 contributes to the L-aspartate binding site. Arg109, His142, and Gln145 together coordinate carbamoyl phosphate. The L-aspartate site is built by Arg182 and Arg253. Positions 294 and 295 each coordinate carbamoyl phosphate.

It belongs to the aspartate/ornithine carbamoyltransferase superfamily. ATCase family. As to quaternary structure, heterododecamer (2C3:3R2) of six catalytic PyrB chains organized as two trimers (C3), and six regulatory PyrI chains organized as three dimers (R2).

The enzyme catalyses carbamoyl phosphate + L-aspartate = N-carbamoyl-L-aspartate + phosphate + H(+). The protein operates within pyrimidine metabolism; UMP biosynthesis via de novo pathway; (S)-dihydroorotate from bicarbonate: step 2/3. Functionally, catalyzes the condensation of carbamoyl phosphate and aspartate to form carbamoyl aspartate and inorganic phosphate, the committed step in the de novo pyrimidine nucleotide biosynthesis pathway. The protein is Aspartate carbamoyltransferase catalytic subunit of Prochlorococcus marinus (strain MIT 9515).